The chain runs to 362 residues: Heme A synthase (362 aa).

A run of 5 helical transmembrane segments spans residues 10-30 (LAAIRIWLTVVAGLIALMVLV), 102-122 (VIGMVYLLPFLWFLWRGAVSG), 128-148 (LWLIFGLGALQGAVGWWMVAS), 159-179 (VRLATHLSLALLIFAAIVWTL), and 198-218 (AWGLVGVTFVQLYLGALVAGL). His262 lines the heme pocket. Helical transmembrane passes span 266 to 286 (AYTLFLLGAWHAFDVMRAGAG), 297 to 317 (LAAILVQAGLGIATLLMVVPI), and 318 to 338 (SLALLHQGTAIIVLTFAVLQA). His323 is a binding site for heme.

The protein belongs to the COX15/CtaA family. Type 2 subfamily. In terms of assembly, interacts with CtaB. Requires heme b as cofactor.

Its subcellular location is the cell membrane. The catalysed reaction is Fe(II)-heme o + 2 A + H2O = Fe(II)-heme a + 2 AH2. The protein operates within porphyrin-containing compound metabolism; heme A biosynthesis; heme A from heme O: step 1/1. Functionally, catalyzes the conversion of heme O to heme A by two successive hydroxylations of the methyl group at C8. The first hydroxylation forms heme I, the second hydroxylation results in an unstable dihydroxymethyl group, which spontaneously dehydrates, resulting in the formyl group of heme A. This chain is Heme A synthase, found in Bradyrhizobium sp. (strain BTAi1 / ATCC BAA-1182).